The chain runs to 168 residues: uncharacterized protein (168 aa).

Positions 1–10 are enriched in pro residues; the sequence is MSPTTGPQPN. Disordered regions lie at residues 1 to 23 and 117 to 143; these read MSPT…TGPQ and EPGN…RGPQ.

This is an uncharacterized protein from Homo sapiens (Human).